A 147-amino-acid polypeptide reads, in one-letter code: Ribosome-binding factor A (147 aa).

Positions 126–147 are disordered; it reads LKKNAQPAGDAHPYKDDDAMND. Over residues 137–147 the composition is skewed to basic and acidic residues; sequence HPYKDDDAMND.

This sequence belongs to the RbfA family. As to quaternary structure, monomer. Binds 30S ribosomal subunits, but not 50S ribosomal subunits or 70S ribosomes.

Its subcellular location is the cytoplasm. In terms of biological role, one of several proteins that assist in the late maturation steps of the functional core of the 30S ribosomal subunit. Associates with free 30S ribosomal subunits (but not with 30S subunits that are part of 70S ribosomes or polysomes). Required for efficient processing of 16S rRNA. May interact with the 5'-terminal helix region of 16S rRNA. This Corynebacterium diphtheriae (strain ATCC 700971 / NCTC 13129 / Biotype gravis) protein is Ribosome-binding factor A.